The following is a 259-amino-acid chain: Dihydroorotate dehydrogenase B (NAD(+)), electron transfer subunit (259 aa).

One can recognise an FAD-binding FR-type domain in the interval 2 to 102 (MQKQNMIVVN…LGPLGHGFPV (101 aa)). FAD is bound by residues 53-56 (RPIS), 70-72 (LYR), and 77-78 (GT). [2Fe-2S] cluster contacts are provided by cysteine 221, cysteine 226, cysteine 229, and cysteine 246.

This sequence belongs to the PyrK family. Heterotetramer of 2 PyrK and 2 PyrD type B subunits. Requires [2Fe-2S] cluster as cofactor. FAD is required as a cofactor.

It functions in the pathway pyrimidine metabolism; UMP biosynthesis via de novo pathway; orotate from (S)-dihydroorotate (NAD(+) route): step 1/1. Its function is as follows. Responsible for channeling the electrons from the oxidation of dihydroorotate from the FMN redox center in the PyrD type B subunit to the ultimate electron acceptor NAD(+). The chain is Dihydroorotate dehydrogenase B (NAD(+)), electron transfer subunit from Bacillus cereus (strain 03BB102).